Reading from the N-terminus, the 230-residue chain is Acetyltransferase (230 aa).

The region spanning 143–230 is the N-acetyltransferase domain; sequence RYLDGKVICD…RVAVYKARQT (88 aa).

It participates in mycotoxin biosynthesis. Functionally, acetyltransferase; part of the satratoxin SC3 cluster involved in the biosynthesis of satratoxins, trichothecene mycotoxins that are associated with human food poisonings. Satratoxins are suggested to be made by products of multiple gene clusters (SC1, SC2 and SC3) that encode 21 proteins in all, including polyketide synthases, acetyltransferases, and other enzymes expected to modify the trichothecene skeleton. SC1 encodes 10 proteins, SAT1 to SAT10. The largest are SAT8, which encodes a putative polyketide synthase (PKS) with a conventional non-reducing architecture, and SAT10, a putative protein containing four ankyrin repeats and thus may be involved in protein scaffolding. The putative short-chain reductase SAT3 may assist the PKS in some capacity. SAT6 contains a secretory lipase domain and acts probably as a trichothecene esterase. SAT5 encodes a putative acetyltransferase, and so, with SAT6, may affect endogenous protection from toxicity. The probable transcription factor SAT9 may regulate the expression of the SC1 cluster. SC2 encodes proteins SAT11 to SAT16, the largest of which encodes the putative reducing PKS SAT13. SAT11 is a cytochrome P450 monooxygenase, while SAT14 and SAT16 are probable acetyltransferases. The SC2 cluster may be regulated by the transcription factor SAT15. SC3 is a small cluster that encodes 5 proteins, SAT17 to SAT21. SAT21 is a putative MFS-type transporter which may have a role in exporting secondary metabolites. The four other proteins putatively encoded in SC3 include the taurine hydroxylase-like protein SAT17, the O-methyltransferase SAT18, the acetyltransferase SAT19, and the Cys6-type zinc finger SAT20, the latter being probably involved in regulation of SC3 expression. The sequence is that of Acetyltransferase from Stachybotrys chartarum (strain CBS 109288 / IBT 7711) (Toxic black mold).